Reading from the N-terminus, the 161-residue chain is S-ribosylhomocysteine lyase (161 aa).

Fe cation contacts are provided by histidine 57, histidine 61, and cysteine 127.

Belongs to the LuxS family. Homodimer. Fe cation is required as a cofactor.

It carries out the reaction S-(5-deoxy-D-ribos-5-yl)-L-homocysteine = (S)-4,5-dihydroxypentane-2,3-dione + L-homocysteine. In terms of biological role, involved in the synthesis of autoinducer 2 (AI-2) which is secreted by bacteria and is used to communicate both the cell density and the metabolic potential of the environment. The regulation of gene expression in response to changes in cell density is called quorum sensing. Catalyzes the transformation of S-ribosylhomocysteine (RHC) to homocysteine (HC) and 4,5-dihydroxy-2,3-pentadione (DPD). This chain is S-ribosylhomocysteine lyase, found in Streptococcus equi subsp. equi (strain 4047).